The primary structure comprises 226 residues: UPF0177 protein YbdJ (226 aa).

The next 5 helical transmembrane spans lie at 16–36, 43–63, 81–101, 169–189, and 206–226; these read LLLL…LGIF, FAFN…IVIA, LLFI…AHHL, FAWV…ISLV, and LHSS…FWVF.

It belongs to the UPF0177 family.

The protein localises to the cell membrane. This Lactococcus lactis subsp. lactis (strain IL1403) (Streptococcus lactis) protein is UPF0177 protein YbdJ (ybdJ).